The following is a 372-amino-acid chain: Glutamate 5-kinase (372 aa).

Lysine 14 lines the ATP pocket. The substrate site is built by serine 54, aspartate 141, and asparagine 153. 173 to 174 (TD) is an ATP binding site. The 79-residue stretch at 280 to 358 (RGHVVIDDGA…GEIESVLGYM (79 aa)) folds into the PUA domain.

The protein belongs to the glutamate 5-kinase family.

The protein localises to the cytoplasm. It carries out the reaction L-glutamate + ATP = L-glutamyl 5-phosphate + ADP. The protein operates within amino-acid biosynthesis; L-proline biosynthesis; L-glutamate 5-semialdehyde from L-glutamate: step 1/2. Functionally, catalyzes the transfer of a phosphate group to glutamate to form L-glutamate 5-phosphate. The sequence is that of Glutamate 5-kinase from Paraburkholderia xenovorans (strain LB400).